An 82-amino-acid polypeptide reads, in one-letter code: Sec-independent protein translocase protein TatA (82 aa).

Residues 1–21 traverse the membrane as a helical segment; the sequence is MGIFDWKHWIVILIVVVLVFG. A disordered region spans residues 43–82; the sequence is VNTEEDDKKEQPAAQPAQPLNQPHTIDAQAQKVEEPARKD.

Belongs to the TatA/E family. In terms of assembly, the Tat system comprises two distinct complexes: a TatABC complex, containing multiple copies of TatA, TatB and TatC subunits, and a separate TatA complex, containing only TatA subunits. Substrates initially bind to the TatABC complex, which probably triggers association of the separate TatA complex to form the active translocon.

The protein localises to the cell inner membrane. Part of the twin-arginine translocation (Tat) system that transports large folded proteins containing a characteristic twin-arginine motif in their signal peptide across membranes. TatA could form the protein-conducting channel of the Tat system. This Pseudomonas paraeruginosa (strain DSM 24068 / PA7) (Pseudomonas aeruginosa (strain PA7)) protein is Sec-independent protein translocase protein TatA.